We begin with the raw amino-acid sequence, 757 residues long: MFKIIKKSIEWGGRTLSLETGKIARQAHGSVVVNYGDTSVLVTVVSKKKEENVDFLPLNVQFIAKSYAMGKIPGGFFKREGKPSDRETLISRVIDRSIRPLFPEGFHDEISVVCNLLTYDTVNPPEVPALIGAVAALAISGVPFHFTIAGVMVGCDENNNYILNPSVQEMKASSLDLFLSGDENSILMVESEVKELSEENVFNAIKFGHEHLKPVIKLIKEFADTIGNKPESFAPIDASDITQELEKYGKDFEKAYSQTVKQERVQALEAIRENILNTLKETGKDEKLITYAVKNFERSLVREIIRKKSVRIDGRKHDEIRQIEVEVDILSKTHGSALFTRGNTQALVVTALGTTQDEQIVDDIEGDRREHFMLHYNFPSFAVGETSAARAPGRREIGHGKLAWKAIHPVLPDKSEFPYTIRVVSEILESDGSSSMATVCGTSLALMDTGVPIKAPVAGIAMGLIKDKDEYVILSDILGDEDYLGDMDFKVAGTSEGVTALQMDMKISGISFEIVEKSLEQAKAGRLHILEKMNAVISEHSDDVKDHAPRMLSFYIDKDKISAAIGSKGKNIRSVCERSNAKIEIGDDGKVSVFATSGTEAEIAKSMMIDSITELEQGSIVDVKVVRIEKSIVELEFLNGRKGKMHISEVANEHIDSIESVLKQDDTFKALVIDFEKGGCPKLSRRRVDQETGEFFEGELYNEERKDGPNDRDNYYNNSFSRKPGGSHHKRPPRPRSGFSNRNRPKFGNNDSSSGFY.

Residues D482 and D488 each coordinate Mg(2+). Positions 549–608 constitute a KH domain; the sequence is PRMLSFYIDKDKISAAIGSKGKNIRSVCERSNAKIEIGDDGKVSVFATSGTEAEIAKSMM. Positions 618–686 constitute an S1 motif domain; that stretch reads GSIVDVKVVR…KGGCPKLSRR (69 aa). A compositionally biased stretch (basic and acidic residues) spans 703-714; the sequence is EERKDGPNDRDN. Residues 703–757 are disordered; that stretch reads EERKDGPNDRDNYYNNSFSRKPGGSHHKRPPRPRSGFSNRNRPKFGNNDSSSGFY. The segment covering 725–734 has biased composition (basic residues); sequence GGSHHKRPPR.

It belongs to the polyribonucleotide nucleotidyltransferase family. Requires Mg(2+) as cofactor.

Its subcellular location is the cytoplasm. The enzyme catalyses RNA(n+1) + phosphate = RNA(n) + a ribonucleoside 5'-diphosphate. Its function is as follows. Involved in mRNA degradation. Catalyzes the phosphorolysis of single-stranded polyribonucleotides processively in the 3'- to 5'-direction. This is Polyribonucleotide nucleotidyltransferase from Wolbachia sp. subsp. Drosophila simulans (strain wRi).